Here is an 878-residue protein sequence, read N- to C-terminus: Aconitate hydratase A (878 aa).

The [4Fe-4S] cluster site is built by Cys426, Cys492, and Cys495.

This sequence belongs to the aconitase/IPM isomerase family. As to quaternary structure, monomer. The cofactor is [4Fe-4S] cluster.

It catalyses the reaction citrate = D-threo-isocitrate. It carries out the reaction (2S,3R)-3-hydroxybutane-1,2,3-tricarboxylate = 2-methyl-cis-aconitate + H2O. It functions in the pathway carbohydrate metabolism; tricarboxylic acid cycle; isocitrate from oxaloacetate: step 2/2. The protein operates within organic acid metabolism; propanoate degradation. Its function is as follows. Involved in the catabolism of short chain fatty acids (SCFA) via the tricarboxylic acid (TCA)(acetyl degradation route) and probably the 2-methylcitrate cycle I (propionate degradation route). Catalyzes the reversible isomerization of citrate to isocitrate via cis-aconitate. Could catalyze the hydration of 2-methyl-cis-aconitate to yield (2R,3S)-2-methylisocitrate. The apo form of AcnA functions as a RNA-binding regulatory protein. The protein is Aconitate hydratase A (acnA) of Rickettsia felis (strain ATCC VR-1525 / URRWXCal2) (Rickettsia azadi).